A 120-amino-acid polypeptide reads, in one-letter code: UPF0231 protein KPN78578_01240 (120 aa).

This sequence belongs to the UPF0231 family.

The chain is UPF0231 protein KPN78578_01240 from Klebsiella pneumoniae subsp. pneumoniae (strain ATCC 700721 / MGH 78578).